The sequence spans 1581 residues: Rho guanine nucleotide exchange factor 5 (1581 aa).

6 disordered regions span residues 25–54 (EGIM…TDGH), 159–274 (VSKE…EQKQ), 316–643 (LRDS…RDGI), 659–700 (SEEF…PPTV), 741–810 (HSHP…PEFY), and 829–1051 (VPII…GSSD). The span at 41 to 54 (QEDRDPSYKWTDGH) shows a compositional bias: basic and acidic residues. The span at 204-221 (KQLQLEATQENQGQEGFL) shows a compositional bias: polar residues. Acidic residues predominate over residues 228 to 241 (GLEEQEGQEVEIQE). Basic and acidic residues-rich tracts occupy residues 326 to 336 (QESREVEERRV) and 345 to 380 (RLVE…DSGD). Ser-446 carries the phosphoserine modification. The segment covering 474–492 (LDNRTHNSQQEEFRLRKGI) has biased composition (basic and acidic residues). Polar residues predominate over residues 496–507 (SASTSVAPSGTR). Over residues 515–531 (PNVFSSTATLSPVSSSV) the composition is skewed to low complexity. 5 stretches are compositionally biased toward polar residues: residues 569-595 (TSDT…NSFP), 603-613 (TPDSLGMSLSF), 662-685 (FTSN…QNSA), 748-760 (TLSS…SKGS), and 779-791 (TPES…TSIP). Residues 829–843 (VPIIDPSSEPPPLPP) show a composition bias toward pro residues. Composition is skewed to polar residues over residues 867-881 (PNNQ…SVGR), 889-905 (GRST…NNEV), and 912-925 (SNMT…SPTT). A phosphoserine mark is found at Ser-953 and Ser-969. The segment covering 975–986 (KNSEKPLHHQLE) has biased composition (basic and acidic residues). Ser-1029 and Ser-1110 each carry phosphoserine. One can recognise a DH domain in the interval 1158–1342 (KLQEAKFELI…EKLIRDCNSN (185 aa)). The PH domain maps to 1375-1488 (LVKSGELTAL…SALAMPREEL (114 aa)). Residues 1494–1555 (YDSPQVQCLR…PVQQVEFISN (62 aa)) form the SH3 domain.

Interacts with SRC. Forms a ternary complex with SRC and the PI3K 85 kDa subunit. Interacts with and is activated by the heterodimer formed by GNB1 and GNG2. Interacts with ODAM (via C-terminus). Interacts with RHOA. Activation of SRC induces tyrosine phosphorylation of ARHGEF5.

Its subcellular location is the nucleus. It localises to the cytoplasm. It is found in the cell projection. The protein resides in the podosome. Functionally, guanine nucleotide exchange factor which activates Rho GTPases. Strongly activates RHOA. Also strongly activates RHOB, weakly activates RHOC and RHOG and shows no effect on RHOD, RHOV, RHOQ or RAC1. Involved in regulation of cell shape and actin cytoskeletal organization. Plays a role in actin organization by generating a loss of actin stress fibers and the formation of membrane ruffles and filopodia. Required for SRC-induced podosome formation. Involved in positive regulation of immature dendritic cell migration. The polypeptide is Rho guanine nucleotide exchange factor 5 (Mus musculus (Mouse)).